We begin with the raw amino-acid sequence, 328 residues long: Acetyl-coenzyme A carboxylase carboxyl transferase subunit alpha (328 aa).

The CoA carboxyltransferase C-terminal domain maps to 42 to 296 (SFKEQLSILK…KESLISELHF (255 aa)).

It belongs to the AccA family. In terms of assembly, acetyl-CoA carboxylase is a heterohexamer composed of biotin carboxyl carrier protein (accB), biotin carboxylase (accC) and two subunits each of ACCase subunit alpha (accA) and ACCase subunit beta (accD).

It is found in the plastid. The protein localises to the chloroplast. The catalysed reaction is N(6)-carboxybiotinyl-L-lysyl-[protein] + acetyl-CoA = N(6)-biotinyl-L-lysyl-[protein] + malonyl-CoA. It functions in the pathway lipid metabolism; malonyl-CoA biosynthesis; malonyl-CoA from acetyl-CoA: step 1/1. Its function is as follows. Component of the acetyl coenzyme A carboxylase (ACC) complex. First, biotin carboxylase catalyzes the carboxylation of biotin on its carrier protein (BCCP) and then the CO(2) group is transferred by the carboxyltransferase to acetyl-CoA to form malonyl-CoA. The sequence is that of Acetyl-coenzyme A carboxylase carboxyl transferase subunit alpha from Gracilaria tenuistipitata var. liui (Red alga).